A 239-amino-acid chain; its full sequence is Small ribosomal subunit protein uS2 (239 aa).

This sequence belongs to the universal ribosomal protein uS2 family.

In Francisella tularensis subsp. holarctica (strain FTNF002-00 / FTA), this protein is Small ribosomal subunit protein uS2.